The chain runs to 1320 residues: Sister chromatid cohesion protein PDS5 homolog A (1320 aa).

HEAT repeat units follow at residues 156–195 (NEIF…EGDG), 272–310 (PLLL…AKDS), 388–426 (NLVN…KYCL), 709–747 (PQIR…NKEV), and 990–1028 (SLLP…CLWF). A compositionally biased stretch (polar residues) spans 1158–1179 (TFTSETGSNASTNSQPSSPATN). The disordered stretch occupies residues 1158–1320 (TFTSETGSNA…APQRQIDLQR (163 aa)). Basic and acidic residues predominate over residues 1180-1194 (KSRDVSSEVGARENE). The segment covering 1225 to 1241 (GTENSVSSNPSAGSQPP) has biased composition (polar residues). Low complexity predominate over residues 1255–1267 (AGAATQEKEAGAT). Polar residues predominate over residues 1283-1293 (QDPSSTASTDA). Positions 1294-1309 (LSDKTPKQQKEAEPKR) are enriched in basic and acidic residues.

The protein belongs to the PDS5 family. In terms of assembly, interacts with the cohesin complex. Binds chromatin in a cohesin-dependent manner.

It is found in the nucleus. Functionally, may regulate sister chromatid cohesion during mitosis and couple it to DNA replication. In Danio rerio (Zebrafish), this protein is Sister chromatid cohesion protein PDS5 homolog A.